We begin with the raw amino-acid sequence, 176 residues long: Ribosome rescue factor SmrB (176 aa).

In terms of domain architecture, Smr spans 93–168; the sequence is LDLHGYRQSE…GDAALLVLID (76 aa).

Belongs to the SmrB family. Associates with collided ribosomes, but not with correctly translating polysomes.

Functionally, acts as a ribosome collision sensor. Detects stalled/collided disomes (pairs of ribosomes where the leading ribosome is stalled and a second ribosome has collided with it) and endonucleolytically cleaves mRNA at the 5' boundary of the stalled ribosome. Stalled/collided disomes form a new interface (primarily via the 30S subunits) that binds SmrB. Cleaved mRNA becomes available for tmRNA ligation, leading to ribosomal subunit dissociation and rescue of stalled ribosomes. The polypeptide is Ribosome rescue factor SmrB (Shewanella sp. (strain ANA-3)).